A 148-amino-acid polypeptide reads, in one-letter code: NADH-quinone oxidoreductase subunit A (148 aa).

3 helical membrane passes run 14–34 (WAFA…LVGG), 68–88 (FYLV…LYAW), and 98–118 (VGFV…VYLV).

This sequence belongs to the complex I subunit 3 family. In terms of assembly, NDH-1 is composed of 13 different subunits. Subunits NuoA, H, J, K, L, M, N constitute the membrane sector of the complex.

The protein localises to the cell inner membrane. It carries out the reaction a quinone + NADH + 5 H(+)(in) = a quinol + NAD(+) + 4 H(+)(out). NDH-1 shuttles electrons from NADH, via FMN and iron-sulfur (Fe-S) centers, to quinones in the respiratory chain. The immediate electron acceptor for the enzyme in this species is believed to be ubiquinone. Couples the redox reaction to proton translocation (for every two electrons transferred, four hydrogen ions are translocated across the cytoplasmic membrane), and thus conserves the redox energy in a proton gradient. This Klebsiella pneumoniae subsp. pneumoniae (strain ATCC 700721 / MGH 78578) protein is NADH-quinone oxidoreductase subunit A.